The primary structure comprises 687 residues: Solute carrier organic anion transporter family member 1B2 (687 aa).

The Cytoplasmic segment spans residues 1–28 (MDHTQQSRKAAEAQPSRSKQTRFCDGFK). The helical transmembrane segment at 29 to 48 (LFLAALSFSYICKALGGVVM) threads the bilayer. At 49 to 67 (KSSITQIERRFDIPSSISG) the chain is on the extracellular side. A helical transmembrane segment spans residues 68–88 (LIDGGFEIGNLLVIVFVSYFG). The Cytoplasmic segment spans residues 89–94 (SKLHRP). Residues 95–119 (KLIGIGCFIMGIGSILTALPHFFMG) traverse the membrane as a helical segment. Over 120 to 165 (YYKYAKENDIGSLGNSTLTCFINQMTSPTGPSPEIVEKGCEKGLKS) the chain is Extracellular. Asparagine 134 carries an N-linked (GlcNAc...) asparagine glycan. Residues 166–194 (HMWIYVLMGNMLRGIGETPIVPLGISYLD) form a helical membrane-spanning segment. The Cytoplasmic segment spans residues 195 to 213 (DFAKEGHTSMHLGTLHTIA). Residues 214–234 (MIGPILGFIMSSVFAKIYVDV) form a helical membrane-spanning segment. Residues 235-252 (GYVDLNSVRITPNDARWV) are Extracellular-facing. The chain crosses the membrane as a helical span at residues 253 to 277 (GAWWLSFIVNGLLCITSSIPFFFLP). The Cytoplasmic segment spans residues 278–328 (KIPKRSQEERKNSVSLHAPKTDEEKKHMTNLTKQEEQDPSNMTGFLRSLRS). Positions 286-311 (ERKNSVSLHAPKTDEEKKHMTNLTKQ) are disordered. 2 positions are modified to phosphoserine: serine 290 and serine 292. Residues 329–350 (ILTNEIYVIFLILTLLQVSGFI) traverse the membrane as a helical segment. Residues 351 to 370 (GSFTYLFKFIEQQFGRTASQ) are Extracellular-facing. A helical transmembrane segment spans residues 371–394 (ANFLLGIITIPTMATAMFLGGYIV). Topologically, residues 395 to 398 (KKFK) are cytoplasmic. The chain crosses the membrane as a helical span at residues 399–422 (LTSVGIAKFVFFTSSVAYAFQFLY). Over 423–531 (FPLLCENKPF…YKCKTNYYFY (109 aa)) the chain is Extracellular. Residues 450 to 507 (DVPLSYCNSDCSCDKNQWEPICGENGVTYISPCLAGCKSFRGDKKPNNTEFYDCSCIS) enclose the Kazal-like domain. Disulfide bonds link cysteine 456-cysteine 486, cysteine 462-cysteine 482, and cysteine 471-cysteine 505. 2 N-linked (GlcNAc...) asparagine glycosylation sites follow: asparagine 496 and asparagine 511. Residues 532 to 554 (IILQVTVSFFTAMGSPSLILILM) traverse the membrane as a helical segment. The Cytoplasmic segment spans residues 555–563 (KSVQPELKS). Residues 564–589 (LAMGFHSLIIRALGGILAPIYYGAFI) traverse the membrane as a helical segment. Over 590-623 (DRTCIKWSVTSCGKRGACRLYNSRLFGFSYLGLN) the chain is Extracellular. The helical transmembrane segment at 624-641 (LALKTPPLFLYVVLIYFT) threads the bilayer. The Cytoplasmic portion of the chain corresponds to 642-687 (KRKYKRNDNKTLENGRQFTDEGNPDSVNKNGYYCVPYDEQSNETPL). Position 660 is a phosphothreonine (threonine 660). Serine 667 bears the Phosphoserine mark.

It belongs to the organo anion transporter (TC 2.A.60) family. As to expression, liver specific. Expression is highest in central perivenous hepatocytes and lowest in the periportal region. Isoform 1 predominates. Not detected in heart, brain, kidney, skeletal muscle, lung, testis or spleen.

Its subcellular location is the basolateral cell membrane. The enzyme catalyses estrone 3-sulfate(out) = estrone 3-sulfate(in). The catalysed reaction is taurocholate(out) = taurocholate(in). It catalyses the reaction prostaglandin E2(out) = prostaglandin E2(in). It carries out the reaction L-thyroxine(out) = L-thyroxine(in). Functionally, mediates the Na(+)-independent uptake of organic anions such as taurochlate, bromosulfophthalein and steroid conjugates (estrone 3-sulfate, 17-beta-glucuronosyl estradiol, dehydroepiandrosterone sulfate). Also transports prostaglandin E2 and L-thyroxine (T4). Shows a pH-sensitive substrate specificity which may be ascribed to the protonation state of the binding site and leads to a stimulation of substrate transport in an acidic microenvironment. Hydrogencarbonate/HCO3(-) acts as the probable counteranion that exchanges for organic anions. This is Solute carrier organic anion transporter family member 1B2 (Slco1b2) from Rattus norvegicus (Rat).